A 121-amino-acid polypeptide reads, in one-letter code: Putative iron-sulfur cluster insertion protein ErpA (121 aa).

Iron-sulfur cluster-binding residues include Cys49, Cys113, and Cys115.

It belongs to the HesB/IscA family. Homodimer. Requires iron-sulfur cluster as cofactor.

Required for insertion of 4Fe-4S clusters. The sequence is that of Putative iron-sulfur cluster insertion protein ErpA from Nitrosomonas eutropha (strain DSM 101675 / C91 / Nm57).